The chain runs to 218 residues: Methylthioribulose-1-phosphate dehydratase (218 aa).

Residues His107 and His109 each coordinate Zn(2+).

It belongs to the aldolase class II family. MtnB subfamily. The cofactor is Zn(2+).

The enzyme catalyses 5-(methylsulfanyl)-D-ribulose 1-phosphate = 5-methylsulfanyl-2,3-dioxopentyl phosphate + H2O. The protein operates within amino-acid biosynthesis; L-methionine biosynthesis via salvage pathway; L-methionine from S-methyl-5-thio-alpha-D-ribose 1-phosphate: step 2/6. Functionally, catalyzes the dehydration of methylthioribulose-1-phosphate (MTRu-1-P) into 2,3-diketo-5-methylthiopentyl-1-phosphate (DK-MTP-1-P). In Xylella fastidiosa (strain 9a5c), this protein is Methylthioribulose-1-phosphate dehydratase.